The following is a 231-amino-acid chain: 7-cyano-7-deazaguanine synthase (231 aa).

8–18 contacts ATP; it reads FSGGQDSTTCL. Zn(2+)-binding residues include C188, C197, C200, and C203.

It belongs to the QueC family. Zn(2+) is required as a cofactor.

The catalysed reaction is 7-carboxy-7-deazaguanine + NH4(+) + ATP = 7-cyano-7-deazaguanine + ADP + phosphate + H2O + H(+). The protein operates within purine metabolism; 7-cyano-7-deazaguanine biosynthesis. Functionally, catalyzes the ATP-dependent conversion of 7-carboxy-7-deazaguanine (CDG) to 7-cyano-7-deazaguanine (preQ(0)). This chain is 7-cyano-7-deazaguanine synthase, found in Sodalis glossinidius (strain morsitans).